The following is a 552-amino-acid chain: Elongator complex protein 3 (552 aa).

One can recognise a Radical SAM core domain in the interval 84 to 374 (RTASGIAVVA…YRVQRDIPMP (291 aa)). Cys-101, Cys-111, and Cys-114 together coordinate [4Fe-4S] cluster. Residues Lys-166, 476-479 (ELHV), 499-501 (FGM), and Tyr-532 contribute to the acetyl-CoA site. Positions 398 to 552 (TTCRDVRTRE…YMSKSIEENN (155 aa)) constitute an N-acetyltransferase domain.

The protein belongs to the ELP3 family. In terms of assembly, component of the elongator complex composed of Elp1, Elp2, Elp3, Elp4, Elp5 and Elp6. The elongator complex associates with and stabilizes microtubules; efficient interaction requires the full complex. Requires [4Fe-4S] cluster as cofactor.

Its subcellular location is the cytoplasm. The protein resides in the nucleus. The protein localises to the cytoskeleton. It localises to the spindle. It catalyses the reaction uridine(34) in tRNA + acetyl-CoA + S-adenosyl-L-methionine + H2O = 5-(carboxymethyl)uridine(34) in tRNA + 5'-deoxyadenosine + L-methionine + CoA + 2 H(+). The protein operates within tRNA modification; 5-methoxycarbonylmethyl-2-thiouridine-tRNA biosynthesis. Catalytic tRNA acetyltransferase subunit of the elongator complex, which is required for multiple tRNA modifications, including mcm5U (5-methoxycarbonylmethyl uridine), mcm5s2U (5-methoxycarbonylmethyl-2-thiouridine), and ncm5U (5-carbamoylmethyl uridine). In the elongator complex, acts as a tRNA uridine(34) acetyltransferase by mediating formation of carboxymethyluridine in the wobble base at position 34 in tRNAs. Binding by the elongator complex stabilizes microtubules and promotes their growth. This induces central spindle asymmetry, promoting polarized signaling endosome trafficking during asymmetric cell division and cell fate assignation of sensory organ precursor cells. Plays a role in the control of synaptic bouton expansion. Required for larval development. Involved in protein synthesis-dependent long-term memory formation, probably as part of the elongator complex. The polypeptide is Elongator complex protein 3 (Drosophila melanogaster (Fruit fly)).